The primary structure comprises 420 residues: MDKLVIEGGQKLAGEIVVSGAKNAALPILCAGLLSAEPVHLDNVPDLQDVRTTLKLLGQMGVRTESADGKVSLDASKVDNLVAPYELVKTMRASILVLGPLVARFGEAKVSLPGGCAIGARPVDQHIKGLQAMGAEINIEHGFIEARAKRLKGARIITDMITVTGTENLLMAAVLADGETIIENAAREPEVGDLASLLVSMGAKIEGIGTDRLVIQGVDKLHGAKHTVVPDRIEAGTFLCAVAAAGGDVTLRHVRPQILEAVTDKLRDAGVTIEEGDDWMRVRMNQRPKAVSFRTSEYPAFPTDMQAQFMALNTLAEGTSQVVETIFENRFMHVQELNRLGANITIDGKTALVNGVEKLSGAKVMATDLRASASLVIAGLCADGETLIDRIYHLDRGYDRMESKLTAVGAKVRRIKGNQA.

Position 22–23 (22–23 (KN)) interacts with phosphoenolpyruvate. UDP-N-acetyl-alpha-D-glucosamine is bound at residue arginine 92. Cysteine 116 serves as the catalytic Proton donor. Cysteine 116 is subject to 2-(S-cysteinyl)pyruvic acid O-phosphothioketal. Residues 121–125 (RPVDQ), aspartate 304, and isoleucine 326 contribute to the UDP-N-acetyl-alpha-D-glucosamine site.

This sequence belongs to the EPSP synthase family. MurA subfamily.

It localises to the cytoplasm. The enzyme catalyses phosphoenolpyruvate + UDP-N-acetyl-alpha-D-glucosamine = UDP-N-acetyl-3-O-(1-carboxyvinyl)-alpha-D-glucosamine + phosphate. Its pathway is cell wall biogenesis; peptidoglycan biosynthesis. In terms of biological role, cell wall formation. Adds enolpyruvyl to UDP-N-acetylglucosamine. In Paraburkholderia phymatum (strain DSM 17167 / CIP 108236 / LMG 21445 / STM815) (Burkholderia phymatum), this protein is UDP-N-acetylglucosamine 1-carboxyvinyltransferase.